The following is a 292-amino-acid chain: Ribose import binding protein RbsB (292 aa).

Residues 1-23 (MKKLTALTSAVLLGLAVSSSASA) form the signal peptide.

Belongs to the bacterial solute-binding protein 2 family. The complex is composed of an ATP-binding protein (RbsA), two transmembrane proteins (RbsC) and a solute-binding protein (RbsB).

It is found in the periplasm. Part of the ABC transporter complex RbsABC involved in ribose import. Binds ribose. This is Ribose import binding protein RbsB (rbsB) from Haemophilus influenzae (strain ATCC 51907 / DSM 11121 / KW20 / Rd).